Consider the following 107-residue polypeptide: Thioredoxin-1 (107 aa).

The region spanning 2–106 is the Thioredoxin domain; that stretch reads ASVRTMTDFH…LTNMMAKLVK (105 aa). Residues Cys31 and Cys34 each act as nucleophile in the active site. Residues Cys31 and Cys34 are joined by a disulfide bond.

This sequence belongs to the thioredoxin family.

It is found in the nucleus. In terms of biological role, participates in various redox reactions through the reversible oxidation of its active center dithiol to a disulfide and catalyzes dithiol-disulfide exchange reactions. As a reducing substrate of peroxiredoxin 1, thioredoxin 2 is preferred over thioredoxin 1. Required for female meiosis and early embryonic development. The sequence is that of Thioredoxin-1 (dhd) from Drosophila yakuba (Fruit fly).